We begin with the raw amino-acid sequence, 158 residues long: Egg cell-secreted protein 1.1 (158 aa).

The first 27 residues, 1–27 (MASKSSFMATFNIVTLMLMVASSTVTA), serve as a signal peptide directing secretion. N-linked (GlcNAc...) asparagine glycosylation occurs at Asn122.

It belongs to the plant egg cell-secreted peptide family. As to expression, restricted to female reproductive tissues, specifically accumulating in storage vesicles of the unfertilized egg cell.

Its subcellular location is the cytoplasmic vesicle. It is found in the secreted. In terms of biological role, involved in the regulation of gamete interactions during the double fertilization and to prevent multiple-pollen tube attraction; mediates the redistribution of the gamete fusogen HAP2/GCS1 to the cell surface after secretion upon sperm arrival. The chain is Egg cell-secreted protein 1.1 (EC1.1) from Arabidopsis thaliana (Mouse-ear cress).